We begin with the raw amino-acid sequence, 1895 residues long: Diacylglycerol kinase eta (1895 aa).

The segment covering 1 to 10 (MAHLKLDTLH) has biased composition (basic and acidic residues). Residues 1–37 (MAHLKLDTLHVQRSPRGSRRSSPSSGRSSACSSGSIS) are disordered. The span at 20–37 (RSSPSSGRSSACSSGSIS) shows a compositional bias: low complexity. Positions 82–175 (AIIKEGFLLK…WLGSLKTATA (94 aa)) constitute a PH domain. Phorbol-ester/DAG-type zinc fingers lie at residues 195–245 (HHHW…IANC) and 267–318 (PHQW…AVAC). In terms of domain architecture, DAGKc spans 349–485 (GNFSPLLVFV…DRWSIMVFEK (137 aa)). Disordered regions lie at residues 781 to 801 (ANIDDAGNRLSPCSDAGENTP), 1012 to 1053 (TTLC…MARL), 1113 to 1137 (QHRGGDNDSDYPEHEQTPTNKGANL), and 1172 to 1191 (PNTILTTSTSPTKKSGHGQD). Residues 1113 to 1128 (QHRGGDNDSDYPEHEQ) are compositionally biased toward basic and acidic residues. Residues 1172–1184 (PNTILTTSTSPTK) show a composition bias toward polar residues. Positions 1832–1895 (WSVNEVVTWL…LQAIKDLSEN (64 aa)) constitute an SAM domain.

Belongs to the eukaryotic diacylglycerol kinase family.

Its subcellular location is the cytoplasm. The enzyme catalyses a 1,2-diacyl-sn-glycerol + ATP = a 1,2-diacyl-sn-glycero-3-phosphate + ADP + H(+). In terms of biological role, phosphorylates diacylglycerol (DAG) to generate phosphatidic acid (PA). This chain is Diacylglycerol kinase eta, found in Drosophila melanogaster (Fruit fly).